Reading from the N-terminus, the 311-residue chain is Glutaminase (311 aa).

Substrate is bound by residues Ser-66, Asn-116, Glu-162, Asn-169, Tyr-193, Tyr-245, and Val-263.

This sequence belongs to the glutaminase family. In terms of assembly, homotetramer.

It catalyses the reaction L-glutamine + H2O = L-glutamate + NH4(+). The sequence is that of Glutaminase from Rhodopseudomonas palustris (strain HaA2).